The chain runs to 88 residues: MRLLLSLPVLLVALSVVLERPAPAQAAPDFSSTLEGLPDKLKEFGNTLEDKAKKAIERIKQSDLPAKTRNWFTETFGKVRDTFKATFS.

An N-terminal signal peptide occupies residues 1 to 26; it reads MRLLLSLPVLLVALSVVLERPAPAQA.

The protein belongs to the apolipoprotein C1 family.

The protein localises to the secreted. In terms of biological role, inhibitor of lipoprotein binding to the low density lipoprotein (LDL) receptor, LDL receptor-related protein, and very low density lipoprotein (VLDL) receptor. Associates with high density lipoproteins (HDL) and the triacylglycerol-rich lipoproteins in the plasma and makes up about 10% of the protein of the VLDL and 2% of that of HDL. Appears to interfere directly with fatty acid uptake and is also the major plasma inhibitor of cholesteryl ester transfer protein (CETP). Binds free fatty acids and reduces their intracellular esterification. Modulates the interaction of APOE with beta-migrating VLDL and inhibits binding of beta-VLDL to the LDL receptor-related protein. This Tupaia glis (Common tree shrew) protein is Apolipoprotein C-I (APOC1).